We begin with the raw amino-acid sequence, 507 residues long: Ribonuclease Y (507 aa).

Residues 1 to 21 (MLWYIVAGAGGLLIGYLIASY) traverse the membrane as a helical segment. Positions 197–282 (TVSTVSLPSD…EMYEKAKQEV (86 aa)) constitute a KH domain. In terms of domain architecture, HD spans 323-416 (VLNHSIEVAL…VAAADALSAA (94 aa)).

It belongs to the RNase Y family.

Its subcellular location is the cell membrane. Its function is as follows. Endoribonuclease that initiates mRNA decay. This is Ribonuclease Y from Thermotoga petrophila (strain ATCC BAA-488 / DSM 13995 / JCM 10881 / RKU-1).